Reading from the N-terminus, the 250-residue chain is UPF0259 membrane protein PC1_1998 (250 aa).

Helical transmembrane passes span 20 to 40 (FISI…LNHA), 90 to 110 (FAAL…IQLV), 132 to 152 (LLFL…LLVI), 156 to 176 (LLAI…SGIF), 192 to 212 (ATAP…LVVS), and 222 to 242 (LGVV…IYLF).

This sequence belongs to the UPF0259 family.

It is found in the cell inner membrane. This Pectobacterium carotovorum subsp. carotovorum (strain PC1) protein is UPF0259 membrane protein PC1_1998.